The chain runs to 483 residues: Alpha-tubulin N-acetyltransferase (483 aa).

An N-acetyltransferase domain is found at 1–186 (MEFRFNMHPL…NNFVVYEGFF (186 aa)). Residues 120–133 (FYVHESRQRGGLGR) and 156–165 (SEKLLGFLQK) each bind acetyl-CoA. Disordered regions lie at residues 204-231 (TASPNTNLFGPTFTTTEERRRSTSQTRT), 330-395 (ETLP…VLGS), and 437-472 (SVKINRPIGKSGTRGSLHDDNESVHSNGSQQGGGGH). Residues 347–369 (YDFHPHHLELHDDTEGGGSHRDQ) are compositionally biased toward basic and acidic residues. The segment covering 370-383 (SLSPQSVSQQASPV) has biased composition (low complexity).

This sequence belongs to the acetyltransferase ATAT1 family.

It carries out the reaction L-lysyl-[alpha-tubulin] + acetyl-CoA = N(6)-acetyl-L-lysyl-[alpha-tubulin] + CoA + H(+). Functionally, specifically acetylates 'Lys-40' in alpha-tubulin on the lumenal side of microtubules. Promotes microtubule destabilization and accelerates microtubule dynamics; this activity may be independent of acetylation activity. Acetylates alpha-tubulin with a slow enzymatic rate, due to a catalytic site that is not optimized for acetyl transfer. Enters the microtubule through each end and diffuses quickly throughout the lumen of microtubules. Acetylates only long/old microtubules because of its slow acetylation rate since it does not have time to act on dynamically unstable microtubules before the enzyme is released. This is Alpha-tubulin N-acetyltransferase from Anopheles gambiae (African malaria mosquito).